The following is a 314-amino-acid chain: tRNA uridine(34) hydroxylase (314 aa).

Residues 135–229 (SDPDTIVIDT…YLEEVPEEES (95 aa)) enclose the Rhodanese domain. Cysteine 189 functions as the Cysteine persulfide intermediate in the catalytic mechanism.

The protein belongs to the TrhO family.

The enzyme catalyses uridine(34) in tRNA + AH2 + O2 = 5-hydroxyuridine(34) in tRNA + A + H2O. Catalyzes oxygen-dependent 5-hydroxyuridine (ho5U) modification at position 34 in tRNAs. This chain is tRNA uridine(34) hydroxylase, found in Agrobacterium fabrum (strain C58 / ATCC 33970) (Agrobacterium tumefaciens (strain C58)).